The sequence spans 1107 residues: uncharacterized protein (1107 aa).

Residues 180–204 are compositionally biased toward low complexity; it reads SGNGSSGGNNNNNNNSLNNSNNSIG. Disordered regions lie at residues 180 to 251 and 501 to 530; these read SGNG…SGNN and LMNI…DNQM. Residues 205-215 are compositionally biased toward gly residues; sequence SSGGNGGGGSN. The segment covering 219-237 has biased composition (polar residues); sequence PSMSPQFTSISKTNSPQII. 2 stretches are compositionally biased toward low complexity: residues 238–251 and 501–521; these read NTSS…SGNN and LMNI…NNND. 2 coiled-coil regions span residues 789–816 and 940–1012; these read KKDI…IYRE and NIDH…NMLK.

This is an uncharacterized protein from Dictyostelium discoideum (Social amoeba).